A 39-amino-acid polypeptide reads, in one-letter code: uncharacterized protein (39 aa).

Positions 1–21 are cleaved as a signal peptide; it reads MHLRSRWWLALLYCKDPVSRS.

This is an uncharacterized protein from Saccharomyces cerevisiae (strain ATCC 204508 / S288c) (Baker's yeast).